We begin with the raw amino-acid sequence, 122 residues long: Prefoldin subunit 1 (122 aa).

Belongs to the prefoldin subunit beta family. Heterohexamer of two PFD-alpha type and four PFD-beta type subunits.

In terms of biological role, binds specifically to cytosolic chaperonin (c-CPN) and transfers target proteins to it. Binds to nascent polypeptide chain and promotes folding in an environment in which there are many competing pathways for nonnative proteins. The sequence is that of Prefoldin subunit 1 (pfdn1) from Tetraodon nigroviridis (Spotted green pufferfish).